The chain runs to 62 residues: Large ribosomal subunit protein bL28 (62 aa).

This sequence belongs to the bacterial ribosomal protein bL28 family.

This chain is Large ribosomal subunit protein bL28, found in Frankia casuarinae (strain DSM 45818 / CECT 9043 / HFP020203 / CcI3).